A 455-amino-acid polypeptide reads, in one-letter code: tRNA-2-methylthio-N(6)-dimethylallyladenosine synthase (455 aa).

In terms of domain architecture, MTTase N-terminal spans 3–117 (KGLYIESYGC…LPELIMKATR (115 aa)). [4Fe-4S] cluster-binding residues include cysteine 12, cysteine 48, cysteine 80, cysteine 155, cysteine 159, and cysteine 162. The Radical SAM core domain occupies 141-375 (VSRGVSAFVS…LLTQQRLFTK (235 aa)).

It belongs to the methylthiotransferase family. MiaB subfamily. As to quaternary structure, monomer. The cofactor is [4Fe-4S] cluster.

Its subcellular location is the cytoplasm. It catalyses the reaction N(6)-dimethylallyladenosine(37) in tRNA + (sulfur carrier)-SH + AH2 + 2 S-adenosyl-L-methionine = 2-methylsulfanyl-N(6)-dimethylallyladenosine(37) in tRNA + (sulfur carrier)-H + 5'-deoxyadenosine + L-methionine + A + S-adenosyl-L-homocysteine + 2 H(+). Catalyzes the methylthiolation of N6-(dimethylallyl)adenosine (i(6)A), leading to the formation of 2-methylthio-N6-(dimethylallyl)adenosine (ms(2)i(6)A) at position 37 in tRNAs that read codons beginning with uridine. The polypeptide is tRNA-2-methylthio-N(6)-dimethylallyladenosine synthase (Anaplasma marginale (strain St. Maries)).